The following is a 135-amino-acid chain: Phosphoribosyl-AMP cyclohydrolase (135 aa).

Residue Asp-78 participates in Mg(2+) binding. Position 79 (Cys-79) interacts with Zn(2+). Residues Asp-80 and Asp-82 each coordinate Mg(2+). Residues Cys-96 and Cys-103 each coordinate Zn(2+).

Belongs to the PRA-CH family. As to quaternary structure, homodimer. Mg(2+) serves as cofactor. It depends on Zn(2+) as a cofactor.

Its subcellular location is the cytoplasm. The enzyme catalyses 1-(5-phospho-beta-D-ribosyl)-5'-AMP + H2O = 1-(5-phospho-beta-D-ribosyl)-5-[(5-phospho-beta-D-ribosylamino)methylideneamino]imidazole-4-carboxamide. Its pathway is amino-acid biosynthesis; L-histidine biosynthesis; L-histidine from 5-phospho-alpha-D-ribose 1-diphosphate: step 3/9. Its function is as follows. Catalyzes the hydrolysis of the adenine ring of phosphoribosyl-AMP. The polypeptide is Phosphoribosyl-AMP cyclohydrolase (Cupriavidus metallidurans (strain ATCC 43123 / DSM 2839 / NBRC 102507 / CH34) (Ralstonia metallidurans)).